A 277-amino-acid chain; its full sequence is Phosphatidylglycerol--prolipoprotein diacylglyceryl transferase (277 aa).

The next 4 membrane-spanning stretches (helical) occupy residues 22 to 42, 51 to 71, 89 to 109, and 116 to 136; these read WYGV…LSEA, IIVD…RIYY, IWHG…TAII, and ISFW…QAIG. Arg137 serves as a coordination point for a 1,2-diacyl-sn-glycero-3-phospho-(1'-sn-glycerol). Transmembrane regions (helical) follow at residues 177 to 197, 205 to 225, and 235 to 255; these read QPTF…LLII, GELF…IEGM, and FRVS…LIIY.

This sequence belongs to the Lgt family.

Its subcellular location is the cell membrane. It catalyses the reaction L-cysteinyl-[prolipoprotein] + a 1,2-diacyl-sn-glycero-3-phospho-(1'-sn-glycerol) = an S-1,2-diacyl-sn-glyceryl-L-cysteinyl-[prolipoprotein] + sn-glycerol 1-phosphate + H(+). The protein operates within protein modification; lipoprotein biosynthesis (diacylglyceryl transfer). Its function is as follows. Catalyzes the transfer of the diacylglyceryl group from phosphatidylglycerol to the sulfhydryl group of the N-terminal cysteine of a prolipoprotein, the first step in the formation of mature lipoproteins. The chain is Phosphatidylglycerol--prolipoprotein diacylglyceryl transferase from Listeria welshimeri serovar 6b (strain ATCC 35897 / DSM 20650 / CCUG 15529 / CIP 8149 / NCTC 11857 / SLCC 5334 / V8).